The following is a 247-amino-acid chain: ATP synthase subunit a, chloroplastic (247 aa).

5 consecutive transmembrane segments (helical) span residues Gln38–Val58, Val95–Leu115, Ile134–Ser154, Leu199–Leu219, and Gly220–Gly240.

Belongs to the ATPase A chain family. In terms of assembly, F-type ATPases have 2 components, CF(1) - the catalytic core - and CF(0) - the membrane proton channel. CF(1) has five subunits: alpha(3), beta(3), gamma(1), delta(1), epsilon(1). CF(0) has four main subunits: a, b, b' and c.

Its subcellular location is the plastid. The protein resides in the chloroplast thylakoid membrane. In terms of biological role, key component of the proton channel; it plays a direct role in the translocation of protons across the membrane. The sequence is that of ATP synthase subunit a, chloroplastic from Sorghum bicolor (Sorghum).